Here is a 182-residue protein sequence, read N- to C-terminus: Heat shock protein beta-2 (182 aa).

In terms of domain architecture, sHSP spans 55 to 163 (RAGEGGRAGA…DTEVNEVYIS (109 aa)).

This sequence belongs to the small heat shock protein (HSP20) family. As to quaternary structure, interacts with DMPK; may enhance its kinase activity.

It is found in the cytoplasm. It localises to the nucleus. Its function is as follows. May regulate the kinase DMPK. The chain is Heat shock protein beta-2 (Hspb2) from Rattus norvegicus (Rat).